Consider the following 354-residue polypeptide: Heat-inducible transcription repressor HrcA (354 aa).

It belongs to the HrcA family.

Functionally, negative regulator of class I heat shock genes (grpE-dnaK-dnaJ and groELS operons). Prevents heat-shock induction of these operons. The chain is Heat-inducible transcription repressor HrcA from Herpetosiphon aurantiacus (strain ATCC 23779 / DSM 785 / 114-95).